Here is a 788-residue protein sequence, read N- to C-terminus: MSDGQWVCLSSEEFDQLQKYSEYSSKKIKDVLAEFNEGGSLKQYDPHKPISYDVFKLFMRAYLEVDLPQPLSTNLFLAFSQKPRQETPDHPKEGASSSEPNVSDSNAESTAKADAACAPDTESKPIKTQVPSEELEAAAPWGEPNAPASSSDAPIVYLKDVVCYLSLMETGRPQDKLEFMFRLYDSDENELLDQAELDQIVSQMLHVAQYLEWDPTELRPILKEMLQGMDYNKDGFVSLEEWVSGGMTTIPLLVLLGMDDSASKGDGRHAWTLKHFKKPTYCNFCHIMLMGVRKQGLCCIYCKYAVHQRCVSNSIPGCVKTYSKAKRSGEVMQHAWVEGNSSVKCDRCHKSIKCYQSVTARHCVWCRMTFHRKCELSTACDGGELKDHILLPTSIYPVTRDRQAGKSDSGAAAKGELVMQYKIIPSPGTHPLLVLVNPKSGGRQGERILQKFHYLLNPKQVFNLDKGGPTPGLNFFQDTPDFRVLACGGDGTVGWILDCIDKANFTKHPPVAVLPLGTGNDLARCLRWGGGYEGGSLTKILKEIEQSPLVMLDRWYLEVMPREEVENGDQVPYNIMNNYFSIGVDASIAHRFHVMREKHPEKFNSRMKNKLWYFEFGTSETFAATCKKLHDHIELECDGVEVDLSNIFLEGIAILNIPSMYGGTNLWGETKKNRAVIRESRKSVTDPKELKCCVQDLSDQLLEVVGLEGAMEMGQIYTGLKSAGRRLAQCSSVTIRTKKLLPMQVDGEPWMQPPCMIKITHKNQAPMMMGPPQKSSFFSLRRKSRSKD.

Positions 83 to 93 are enriched in basic and acidic residues; sequence PRQETPDHPKE. A disordered region spans residues 83–150; the sequence is PRQETPDHPK…WGEPNAPASS (68 aa). Residues 95-109 show a composition bias toward polar residues; that stretch reads ASSSEPNVSDSNAES. EF-hand domains are found at residues 172-207 and 217-252; these read RPQD…MLHV and ELRP…TIPL. Asp-185, Asp-187, Asn-189, Glu-196, Asp-230, Asn-232, Asp-234, and Glu-241 together coordinate Ca(2+). 2 Phorbol-ester/DAG-type zinc fingers span residues 268–318 and 333–380; these read RHAW…IPGC and QHAW…STAC. A DAGKc domain is found at 427-561; it reads PGTHPLLVLV…LDRWYLEVMP (135 aa). A disordered region spans residues 768–788; that stretch reads MMGPPQKSSFFSLRRKSRSKD.

The protein belongs to the eukaryotic diacylglycerol kinase family. In terms of tissue distribution, expressed specifically in brain. Highly expressed in cerebellar Purkinje cells (at protein level).

The protein resides in the membrane. It localises to the cytoplasm. It is found in the cytosol. Its subcellular location is the cytoskeleton. The catalysed reaction is a 1,2-diacyl-sn-glycerol + ATP = a 1,2-diacyl-sn-glycero-3-phosphate + ADP + H(+). The enzyme catalyses 1,2-didecanoyl-sn-glycerol + ATP = 1,2-didecanoyl-sn-glycero-3-phosphate + ADP + H(+). It catalyses the reaction 1,2-di-(9Z-octadecenoyl)-sn-glycerol + ATP = 1,2-di-(9Z-octadecenoyl)-sn-glycero-3-phosphate + ADP + H(+). It carries out the reaction 1-octadecanoyl-2-(9Z,12Z)-octadecadienoyl-sn-glycerol + ATP = 1-octadecanoyl-2-(9Z,12Z-octadecadienoyl)-sn-glycero-3-phosphate + ADP + H(+). The catalysed reaction is 1-octadecanoyl-2-(5Z,8Z,11Z,14Z-eicosatetraenoyl)-sn-glycerol + ATP = 1-octadecanoyl-2-(5Z,8Z,11Z,14Z-eicosatetraenoyl)-sn-glycero-3-phosphate + ADP + H(+). Its pathway is lipid metabolism; glycerolipid metabolism. With respect to regulation, the activity is calcium-dependent. Requires phosphatidylserine for maximal activity. Functionally, diacylglycerol kinase that converts diacylglycerol/DAG into phosphatidic acid/phosphatidate/PA and regulates the respective levels of these two bioactive lipids. Thereby, acts as a central switch between the signaling pathways activated by these second messengers with different cellular targets and opposite effects in numerous biological processes. Has no apparent specificity with regard to the acyl compositions of diacylglycerol. Specifically expressed in the cerebellum where it controls the level of diacylglycerol which in turn regulates the activity of protein kinase C gamma. Through protein kinase C gamma, indirectly regulates the dendritic development of Purkinje cells, cerebellar long term depression and ultimately cerebellar motor coordination. This is Diacylglycerol kinase gamma (Dgkg) from Rattus norvegicus (Rat).